Reading from the N-terminus, the 554-residue chain is Malate synthase 2 (554 aa).

Arg-177 functions as the Proton acceptor in the catalytic mechanism. The active-site Proton donor is Asp-457. Positions 552–554 (SKL) match the SKL peroxisome targeting motif motif.

Belongs to the malate synthase family. Interacts with PEX9.

It is found in the peroxisome matrix. The catalysed reaction is glyoxylate + acetyl-CoA + H2O = (S)-malate + CoA + H(+). Allantoin metabolism-specific malate synthase involved in the recycling the glyoxylate generated during allantoin degradation by the ureidoglycollate (UG) hydrolase reaction. This chain is Malate synthase 2, found in Saccharomyces cerevisiae (strain ATCC 204508 / S288c) (Baker's yeast).